The following is a 96-amino-acid chain: Large ribosomal subunit protein eL43 (96 aa).

The segment at 41 to 62 (CPVCAFPKLKRVGTSIWVCDKC) adopts a C4-type zinc-finger fold.

The protein belongs to the eukaryotic ribosomal protein eL43 family. The cofactor is Zn(2+).

In Methanococcus maripaludis (strain C6 / ATCC BAA-1332), this protein is Large ribosomal subunit protein eL43.